The following is a 273-amino-acid chain: Shikimate dehydrogenase (NADP(+)) (273 aa).

Residues 14 to 16 and Thr-61 each bind shikimate; that span reads SKS. Lys-65 (proton acceptor) is an active-site residue. Asp-77 provides a ligand contact to NADP(+). Residues Asn-86 and Asp-102 each coordinate shikimate. NADP(+) is bound by residues 127-131, 151-156, and Met-215; these read GAGGA and NRTGAR. Tyr-217 contributes to the shikimate binding site. Gly-239 contacts NADP(+).

Belongs to the shikimate dehydrogenase family. In terms of assembly, homodimer.

The enzyme catalyses shikimate + NADP(+) = 3-dehydroshikimate + NADPH + H(+). It functions in the pathway metabolic intermediate biosynthesis; chorismate biosynthesis; chorismate from D-erythrose 4-phosphate and phosphoenolpyruvate: step 4/7. Involved in the biosynthesis of the chorismate, which leads to the biosynthesis of aromatic amino acids. Catalyzes the reversible NADPH linked reduction of 3-dehydroshikimate (DHSA) to yield shikimate (SA). The protein is Shikimate dehydrogenase (NADP(+)) of Thioalkalivibrio sulfidiphilus (strain HL-EbGR7).